Consider the following 399-residue polypeptide: Elongation factor Tu (399 aa).

Residues 10–204 (KPHVNIGTIG…AVDASIPEPE (195 aa)) enclose the tr-type G domain. The tract at residues 19–26 (GHVDHGKT) is G1. 19–26 (GHVDHGKT) is a GTP binding site. Position 26 (Thr26) interacts with Mg(2+). The G2 stretch occupies residues 60-64 (GITIN). Residues 81–84 (DCPG) are G3. GTP-binding positions include 81–85 (DCPGH) and 136–139 (NKCD). The segment at 136–139 (NKCD) is G4. Positions 174–176 (SGL) are G5.

It belongs to the TRAFAC class translation factor GTPase superfamily. Classic translation factor GTPase family. EF-Tu/EF-1A subfamily. In terms of assembly, monomer.

The protein resides in the cytoplasm. It catalyses the reaction GTP + H2O = GDP + phosphate + H(+). Its function is as follows. GTP hydrolase that promotes the GTP-dependent binding of aminoacyl-tRNA to the A-site of ribosomes during protein biosynthesis. This chain is Elongation factor Tu, found in Prochlorococcus marinus (strain SARG / CCMP1375 / SS120).